Consider the following 1253-residue polypeptide: Cytoplasmic FMR1-interacting protein 1 (1253 aa).

Ser-583 is modified (phosphoserine). The EIF4E-binding stretch occupies residues 724-732 (DKRLRSECK). Thr-1234 is modified (phosphothreonine).

It belongs to the CYFIP family. In terms of assembly, component of the WAVE1 complex composed of ABI2, CYFIP1 or CYFIP2, BRK1, NCKAP1 and WASF1/WAVE1. Within the complex, a heterodimer containing NCKAP1 and CYFIP1 interacts with a heterotrimer formed by WAVE1, ABI2 and BRK1. Component of the CYFIP1-EIF4E-FMR1 complex which is composed of CYFIP, EIF4E and FMR1. Interacts with FMR1 but does not bind to related proteins FXR1 or FXR2. Interaction with EIF4E stimulates FMR1 binding. Component of the WAVE2 complex composed of ABI1, CYFIP1/SRA1, NCKAP1/NAP1 (NCKAP1L/HEM1 in hematopoietic cells) and WASF2/WAVE2. Interacts with the active GTP-bound form of RAC1. Interacts through its C-terminus with the C-terminus of DPYSL2/CRMP2 which is necessary for DPYSL2-induced axon outgrowth. Interacts with NYAP1, NYAP2 and MYO16. Interacts with TMEM108 (via N-terminus); the interaction associates TMEM108 with the WAVE1 complex. Highly expressed in embryonic and adult developing nervous system.

The protein resides in the cytoplasm. It localises to the perinuclear region. Its subcellular location is the cell projection. It is found in the lamellipodium. The protein localises to the ruffle. The protein resides in the synapse. It localises to the synaptosome. Component of the CYFIP1-EIF4E-FMR1 complex which binds to the mRNA cap and mediates translational repression. In the CYFIP1-EIF4E-FMR1 complex this subunit is an adapter between EIF4E and FMR1. Promotes the translation repression activity of FMR1 in brain probably by mediating its association with EIF4E and mRNA. Regulates formation of membrane ruffles and lamellipodia. Plays a role in axon outgrowth. Binds to F-actin but not to RNA. Part of the WAVE complex that regulates actin filament reorganization via its interaction with the Arp2/3 complex. Actin remodeling activity is regulated by RAC1. Regulator of epithelial morphogenesis. May act as an invasion suppressor in cancers. As component of the WAVE1 complex, required for BDNF-NTRK2 endocytic trafficking and signaling from early endosomes. The protein is Cytoplasmic FMR1-interacting protein 1 of Mus musculus (Mouse).